The sequence spans 555 residues: CTP synthase (555 aa).

The interval 1–271 (MVKRGKKTKY…DDKLAELFNI (271 aa)) is amidoligase domain. Residue Ser-19 coordinates CTP. Ser-19 serves as a coordination point for UTP. ATP contacts are provided by residues 20-25 (SLGKGL) and Asp-77. 2 residues coordinate Mg(2+): Asp-77 and Glu-145. Residues 152–154 (DIE), 192–197 (KTKPTQ), and Lys-228 contribute to the CTP site. UTP is bound by residues 192–197 (KTKPTQ) and Lys-228. One can recognise a Glutamine amidotransferase type-1 domain in the interval 297–538 (RVGVVGKYVE…VHAAREQRDQ (242 aa)). An L-glutamine-binding site is contributed by Gly-358. Catalysis depends on Cys-385, which acts as the Nucleophile; for glutamine hydrolysis. Residues 386 to 389 (LGLQ), Glu-409, and Arg-466 contribute to the L-glutamine site. Residues His-511 and Glu-513 contribute to the active site.

This sequence belongs to the CTP synthase family. As to quaternary structure, homotetramer.

It carries out the reaction UTP + L-glutamine + ATP + H2O = CTP + L-glutamate + ADP + phosphate + 2 H(+). It catalyses the reaction L-glutamine + H2O = L-glutamate + NH4(+). The enzyme catalyses UTP + NH4(+) + ATP = CTP + ADP + phosphate + 2 H(+). It participates in pyrimidine metabolism; CTP biosynthesis via de novo pathway; CTP from UDP: step 2/2. Its activity is regulated as follows. Allosterically activated by GTP, when glutamine is the substrate; GTP has no effect on the reaction when ammonia is the substrate. The allosteric effector GTP functions by stabilizing the protein conformation that binds the tetrahedral intermediate(s) formed during glutamine hydrolysis. Inhibited by the product CTP, via allosteric rather than competitive inhibition. Its function is as follows. Catalyzes the ATP-dependent amination of UTP to CTP with either L-glutamine or ammonia as the source of nitrogen. Regulates intracellular CTP levels through interactions with the four ribonucleotide triphosphates. The sequence is that of CTP synthase from Anaeromyxobacter sp. (strain Fw109-5).